A 203-amino-acid chain; its full sequence is Mitotic spindle checkpoint component mad2 (203 aa).

In terms of domain architecture, HORMA spans 13 to 197; that stretch reads KGSSKLVSEF…TSMHKIDCQV (185 aa).

It belongs to the MAD2 family. In terms of assembly, interacts with mad3 and slp1.

It is found in the nucleus. Feedback control that prevents cells with incompletely assembled spindles from leaving mitosis. It interacts with the anaphase promoting complex/cyclosome (APC/C) thereby inhibiting APC/C-dependent proteolysis, a step required for exit from mitosis. This is Mitotic spindle checkpoint component mad2 from Schizosaccharomyces pombe (strain 972 / ATCC 24843) (Fission yeast).